Reading from the N-terminus, the 199-residue chain is uncharacterized protein (199 aa).

This is an uncharacterized protein from Rattus norvegicus (Rat).